Reading from the N-terminus, the 89-residue chain is Small ribosomal subunit protein uS15 (89 aa).

Belongs to the universal ribosomal protein uS15 family. In terms of assembly, part of the 30S ribosomal subunit. Forms a bridge to the 50S subunit in the 70S ribosome, contacting the 23S rRNA.

Functionally, one of the primary rRNA binding proteins, it binds directly to 16S rRNA where it helps nucleate assembly of the platform of the 30S subunit by binding and bridging several RNA helices of the 16S rRNA. Forms an intersubunit bridge (bridge B4) with the 23S rRNA of the 50S subunit in the ribosome. In Corynebacterium urealyticum (strain ATCC 43042 / DSM 7109), this protein is Small ribosomal subunit protein uS15.